Reading from the N-terminus, the 536-residue chain is Austinoid biosynthesis cluster protein W (536 aa).

An N-terminal signal peptide occupies residues 1-19; it reads MKHPTVALLGVGMLGCAAA. Disordered regions lie at residues 141-164, 185-220, 261-302, 385-423, and 491-536; these read GSAP…PGFP, SLPG…PGFS, FGVP…ASNG, PGSA…ASNG, and PSPT…SSAE. Over residues 195–208 the composition is skewed to low complexity; sequence SGPSQAAAAPSTGD. The span at 209–220 shows a compositional bias: gly residues; that stretch reads SGSGLPGSPGFS. 2 stretches are compositionally biased toward low complexity: residues 287–302 and 408–423; these read AGNA…ASNG.

It participates in secondary metabolite biosynthesis; terpenoid biosynthesis. Functionally, part of the gene cluster that mediates the biosynthesis of calidodehydroaustin, a fungal meroterpenoid. The first step of the pathway is the synthesis of 3,5-dimethylorsellinic acid by the polyketide synthase ausA. 3,5-dimethylorsellinic acid is then prenylated by the polyprenyl transferase ausN. Further epoxidation by the FAD-dependent monooxygenase ausM and cyclization by the probable terpene cyclase ausL lead to the formation of protoaustinoid A. Protoaustinoid A is then oxidized to spiro-lactone preaustinoid A3 by the combined action of the FAD-binding monooxygenases ausB and ausC, and the dioxygenase ausE. Acid-catalyzed keto-rearrangement and ring contraction of the tetraketide portion of preaustinoid A3 by ausJ lead to the formation of preaustinoid A4. The aldo-keto reductase ausK, with the help of ausH, is involved in the next step by transforming preaustinoid A4 into isoaustinone which is in turn hydroxylated by the P450 monooxygenase ausI to form austinolide. The cytochrome P450 monooxygenase ausG modifies austinolide to austinol. Austinol is further acetylated to austin by the O-acetyltransferase ausP, which spontaneously changes to dehydroaustin. The cytochrome P450 monooxygenase ausR then converts dehydroaustin is into 7-dehydrodehydroaustin. The hydroxylation catalyzed by ausR permits the O-acetyltransferase ausQ to add an additional acetyl group to the molecule, leading to the formation of acetoxydehydroaustin. The short chain dehydrogenase ausT catalyzes the reduction of the double bond present between carbon atoms 1 and 2 to convert 7-dehydrodehydroaustin into 1,2-dihydro-7-hydroxydehydroaustin. AusQ catalyzes not only an acetylation reaction but also the addition of the PKS ausV diketide product to 1,2-dihydro-7-hydroxydehydroaustin, forming precalidodehydroaustin. Finally, the iron/alpha-ketoglutarate-dependent dioxygenase converts precalidodehydroaustin into calidodehydroaustin. This Aspergillus calidoustus protein is Austinoid biosynthesis cluster protein W.